A 70-amino-acid polypeptide reads, in one-letter code: Phycocyanin-645 alpha-2 chain (70 aa).

(2R,3E)-phycocyanobilin is bound at residue Arg-16. The mesobiliverdin site is built by Cys-18, Tyr-26, and Lys-41.

Belongs to the phycoerythrin family. Heterotetramer of 2 different alpha chains and 2 identical beta chains which form 2 alpha-beta heterodimers within the heterotetramer. In terms of processing, contains one phycocyanobilin chromophore, one mesobiliverdin chromophore and one 15,16-dihydrobiliverdin chromophore with binding mediated by both the alpha and beta subunits.

Its subcellular location is the plastid. It localises to the chloroplast thylakoid membrane. Light-harvesting photosynthetic tetrapyrrole chromophore-protein from the phycobiliprotein complex. This chain is Phycocyanin-645 alpha-2 chain, found in Chroomonas sp.